A 543-amino-acid chain; its full sequence is MRWRYTIRDQSPFEESSNCHRLTSSETANTFRWPMRTYNVYGFLLTCTCLLLILTIIPMSGGSSERVQRSVRSVVETKNNIKYGVICDAGSSGTRLFVYTLKPLSGGLTNIDTLIHESEPVVKKVTPGLSSFGDKPEQVVEYLTPLLRFAEEHIPYEQLGETDLLIFATAGMRLLPEAQKDAIIKNLQNGLKSVTALRVSDSNIRIIDGAWEGIYSWIAVNYILGRFDKENDSKVGMIDMGGASVQIAFEIANEKESYNGGNVYEINLGSIETNEDYKYKIYSTTFLGYGANEGLKKYENSLVKSGNSNDSCSPRGLNRLIGEFTVNGTGEWDVCLAQVSSLIGDKAQPSCPNPTCFLRNVIAPSVNLSTVQLYGFSEYWYTTSNFGSGGEYHYQKFTDEVRKYCQKDWNDIQDGFKRNEFPNADIERLGTNCFKAAWVTSVLHDGFNVDKTKHLFQSVLKIAGEEMQWALGAMLYHSKDLKFNLLEQLEVAQSTQQISNFFSFFVILIIVLAVALYRQLQSESTYKKYNFLRTDSKPDFLNV.

The chain crosses the membrane as a helical span at residues 40 to 60 (VYGFLLTCTCLLLILTIIPMS). Catalysis depends on Glu212, which acts as the Proton acceptor. A helical membrane pass occupies residues 497 to 517 (QISNFFSFFVILIIVLAVALY).

Belongs to the GDA1/CD39 NTPase family.

The protein localises to the golgi apparatus membrane. The enzyme catalyses a ribonucleoside 5'-triphosphate + H2O = a ribonucleoside 5'-diphosphate + phosphate + H(+). Functionally, seems to be able to hydrolyze CTP, ATP and UTP. This Caenorhabditis elegans protein is Nucleoside-triphosphatase ntp-1.